The primary structure comprises 525 residues: DEAD-box ATP-dependent RNA helicase CshA (525 aa).

Residues 2–30 carry the Q motif motif; sequence TTFRELGLSDSLLQSVESMGFEEATPIQA. The 171-residue stretch at 33–203 folds into the Helicase ATP-binding domain; that stretch reads IPHALQGKDI…ERFMTEPQHI (171 aa). ATP is bound at residue 46 to 53; that stretch reads AQTGTGKT. Residues 151–154 carry the DEAD box motif; sequence DEAD. One can recognise a Helicase C-terminal domain in the interval 214–374; the sequence is NIQQFYLEVQ…RMDAPTLDEA (161 aa). The tract at residues 428-525 is disordered; it reads TTPIALTSEP…RKHHSRKPQA (98 aa). The segment covering 458–503 has biased composition (basic and acidic residues); that stretch reads DGNRNRSRDGRGGDGRNRDRNRDGRNRDGNRDRNRDGGNRGRRGEG. Over residues 515–525 the composition is skewed to basic residues; that stretch reads ERKHHSRKPQA.

The protein belongs to the DEAD box helicase family. CshA subfamily. In terms of assembly, oligomerizes, may be a member of the RNA degradosome.

It localises to the cytoplasm. The catalysed reaction is ATP + H2O = ADP + phosphate + H(+). Functionally, DEAD-box RNA helicase possibly involved in RNA degradation. Unwinds dsRNA in both 5'- and 3'-directions, has RNA-dependent ATPase activity. The protein is DEAD-box ATP-dependent RNA helicase CshA of Bacillus cereus (strain ATCC 10987 / NRS 248).